The chain runs to 60 residues: Myrmicitoxin(1)-Pr4b (60 aa).

The N-terminal stretch at 1-23 (MKAIIFLFAVLTVVAIIIPIISG) is a signal peptide. Residues 24–33 (EPNAGPHAAS) constitute a propeptide that is removed on maturation. A Glutamine amide modification is found at Gln-59.

It belongs to the formicidae venom clade 2 family. In terms of tissue distribution, expressed by the venom gland.

The protein localises to the secreted. In terms of biological role, toxin that causes a rapid and irreversible paralysis when intrathoracically injected into insects (blowflies). Does not cause spontaneous nocifensive behaviors by intraplantar injection in mice. The polypeptide is Myrmicitoxin(1)-Pr4b (Pogonomyrmex rugosus (Desert harvester ant)).